A 203-amino-acid chain; its full sequence is Urease accessory protein UreG (203 aa).

14–21 (GPVGSGKT) lines the GTP pocket.

This sequence belongs to the SIMIBI class G3E GTPase family. UreG subfamily. In terms of assembly, homodimer. UreD, UreF and UreG form a complex that acts as a GTP-hydrolysis-dependent molecular chaperone, activating the urease apoprotein by helping to assemble the nickel containing metallocenter of UreC. The UreE protein probably delivers the nickel.

It localises to the cytoplasm. Functionally, facilitates the functional incorporation of the urease nickel metallocenter. This process requires GTP hydrolysis, probably effectuated by UreG. This chain is Urease accessory protein UreG, found in Sinorhizobium medicae (strain WSM419) (Ensifer medicae).